The sequence spans 455 residues: MSFLIDSSIMITSQILFFGFGWLFFMRQLFKDYEVRQYVVQVIFSVTFAFSCTMFELIIFEILGVLNSSSRYFHWKLNLCVILLILVFMVPFYIGYFIVSNIQLLHKQRLLFSCLLWLTFMYFFWKLGDPFPILSPKHGILSIEQLISRVGVIGVTLMALLSGFGAVNCPYTYMSYFLRNVTDTDILALERRLLQTMDMIISKKKRMAVARRTMFQRGDVQNKPSGLWGMLKSVTASAPGSENLTLIQQEVDALEELSRQLFLETADLYATKERIEYSKTFKGKYFNFLGYFFSIYCVWKIFMATINIVLDRVGKTDPVTRGIEITVNYLGIQFDVKFWSQHISFILVGIIIVTSIRGLLITLTKFFYAISSSKSSNVIVLLLAQIMGMYFVSSVLLIRMSMPPEYRTIITEVLGELQFNFYHRWFDVIFLVSALSSILFLYLAHKQAPEKHMAP.

Helical transmembrane passes span 5–25 (IDSS…WLFF), 46–66 (VTFA…LGVL), 79–99 (LCVI…YFIV), 114–134 (CLLW…FPIL), and 150–170 (VGVI…VNCP). Asparagine 180 carries N-linked (GlcNAc...) asparagine glycosylation. 4 consecutive transmembrane segments (helical) span residues 288–308 (FLGY…TINI), 343–363 (ISFI…LITL), 378–398 (VIVL…VLLI), and 425–445 (WFDV…YLAH).

It belongs to the Golgi pH regulator (TC 1.A.38) family. Homotrimer. Interacts with RABL3; the interaction stabilizes GPR89.

The protein localises to the golgi apparatus membrane. It carries out the reaction iodide(out) = iodide(in). The catalysed reaction is chloride(in) = chloride(out). It catalyses the reaction bromide(in) = bromide(out). The enzyme catalyses fluoride(in) = fluoride(out). In terms of biological role, voltage-gated channel that enables the transfer of monoatomic anions such as iodide, chloride, bromide and fluoride which may function in counter-ion conductance and participates in Golgi acidification. Plays a role in lymphocyte development, probably by acting as a RABL3 effector in hematopoietic cells. The polypeptide is Golgi pH regulator (Mus musculus (Mouse)).